A 1029-amino-acid chain; its full sequence is Serine/threonine-protein kinase KSP1 (1029 aa).

Residues tyrosine 18–threonine 351 form the Protein kinase domain. Residues glycine 27 to alanine 35 and lysine 47 each bind ATP. A compositionally biased stretch (acidic residues) spans glycine 56–threonine 79. The tract at residues glycine 56–histidine 105 is disordered. Over residues lysine 80–glutamate 89 the composition is skewed to basic and acidic residues. Low complexity predominate over residues asparagine 90–serine 99. The active-site Proton acceptor is the aspartate 207. The interval valine 377 to histidine 397 is disordered. Serine 416 and serine 419 each carry phosphoserine. Phosphothreonine is present on residues threonine 501, threonine 504, and threonine 526. Position 529 is a phosphoserine (serine 529). The disordered stretch occupies residues histidine 532–phenylalanine 570. Positions phenylalanine 538–phenylalanine 570 are enriched in low complexity. Serine 646 carries the post-translational modification Phosphoserine. The interval serine 732–arginine 824 is disordered. Residues asparagine 734–histidine 743 show a composition bias toward low complexity. The segment covering isoleucine 744–histidine 754 has biased composition (polar residues). Over residues histidine 813–arginine 824 the composition is skewed to basic and acidic residues. A phosphoserine mark is found at serine 845 and serine 884. Residues glutamate 949–glutamine 978 are disordered. The segment covering glutamate 953–glycine 964 has biased composition (basic and acidic residues). Threonine 1005 carries the phosphothreonine modification. A Phosphoserine modification is found at serine 1014.

Belongs to the protein kinase superfamily. Ser/Thr protein kinase family. CK2 subfamily. Phosphorylated by PKA in a TORC1-dependent manner. Phosphorylation at PKA consensus sites RRxS/T decreases upon rapamycin treatment.

Its subcellular location is the nucleus. It catalyses the reaction L-seryl-[protein] + ATP = O-phospho-L-seryl-[protein] + ADP + H(+). It carries out the reaction L-threonyl-[protein] + ATP = O-phospho-L-threonyl-[protein] + ADP + H(+). May act on PRP20. The chain is Serine/threonine-protein kinase KSP1 (KSP1) from Saccharomyces cerevisiae (strain ATCC 204508 / S288c) (Baker's yeast).